The chain runs to 774 residues: Transforming acidic coiled-coil-containing protein 1 (774 aa).

Position 2 is an N-acetylalanine (A2). Positions 2–56 are interaction with LSM7 and SNRPG; it reads AFSPWQILSPVQWAKWTWSAVRGSGAGEDEAGGPEGDPEEEEDSQAETKSLSFSS. 3 positions are modified to phosphoserine: S4, S10, and S45. The interval 21–142 is disordered; sequence AVRGSGAGED…VKDVRGKAEH (122 aa). The segment covering 28–46 has biased composition (acidic residues); sequence GEDEAGGPEGDPEEEEDSQ. Positions 48-61 are enriched in polar residues; it reads ETKSLSFSSDSEGN. Basic and acidic residues predominate over residues 88–99; the sequence is PEAKPQESREAD. Over residues 113–128 the composition is skewed to polar residues; that stretch reads DTCSRSSENEAPQATV. A compositionally biased stretch (basic and acidic residues) spans 131–142; that stretch reads HPVKDVRGKAEH. Phosphoserine occurs at positions 148 and 154. The segment at 153 to 255 is interaction with TDRD7; sequence FSIETRNCTD…PEMLMEGSPL (103 aa). An interaction with YEATS4 region spans residues 207–424; sequence EAFTEASLKT…NNINTDDSGD (218 aa). The interval 214-428 is disordered; that stretch reads LKTGGPCPEP…TDDSGDPCKP (215 aa). SPAZ domains lie at 216 to 294 and 354 to 504; these read TGGP…TAGV and SKPV…TDEE. S228 bears the Phosphoserine; by AURKC mark. The segment covering 228 to 241 has biased composition (basic residues); that stretch reads SKLRKPKPVSLRKK. A phosphoserine mark is found at S376 and S401. The segment covering 397 to 407 has biased composition (polar residues); that stretch reads ILQNSPPLSSK. The short motif at 452–468 is the Bipartite nuclear localization signal element; it reads PKKAKSRLITSGCKVKK. Residues S480 and S560 each carry the phosphoserine modification. Residues 579–774 are a coiled coil; that stretch reads IREEIITKEI…ELIAKLGKTD (196 aa). An interaction with CH-TOG region spans residues 670-774; sequence VLEGFKKNEE…ELIAKLGKTD (105 aa).

It belongs to the TACC family. Interacts with CH-TOG and YEATS4. Interacts with the AURKA and AURKB and AURKC. Interacts with LSM7, TDRD7 and SNRPG. Interacts with GCN5L2 and PCAF. Interacts with the thyroid hormone receptors THRB and THRA, predominantly with isoform alpha-2. The interaction with THRA isoform alpha-1 and THRB is decreased in the presence of thyroid hormone T3. Interacts with RARA in the nucleus. Also interacts with other nuclear receptors, including ESR1, NR3C1, PPARG and RXRA, preferentially in the absence of their hormonal ligands.

The protein localises to the cytoplasm. Its subcellular location is the nucleus. The protein resides in the cytoskeleton. It localises to the microtubule organizing center. It is found in the centrosome. The protein localises to the midbody. In terms of biological role, involved in transcription regulation induced by nuclear receptors, including in T3 thyroid hormone and all-trans retinoic acid pathways. Might promote the nuclear localization of the receptors. Likely involved in the processes that promote cell division prior to the formation of differentiated tissues. This Mus musculus (Mouse) protein is Transforming acidic coiled-coil-containing protein 1 (Tacc1).